The sequence spans 394 residues: Elongation factor Tu 1 (394 aa).

Residues 10–204 (KPHVNVGTIG…ALDSYIPEPE (195 aa)) form the tr-type G domain. Positions 19-26 (GHVDHGKT) are G1. 19–26 (GHVDHGKT) is a binding site for GTP. Position 26 (threonine 26) interacts with Mg(2+). The tract at residues 60 to 64 (GITIN) is G2. The segment at 81–84 (DCPG) is G3. Residues 81–85 (DCPGH) and 136–139 (NKCD) contribute to the GTP site. The G4 stretch occupies residues 136–139 (NKCD). Residues 174-176 (SAL) are G5.

This sequence belongs to the TRAFAC class translation factor GTPase superfamily. Classic translation factor GTPase family. EF-Tu/EF-1A subfamily. Monomer.

The protein localises to the cytoplasm. The catalysed reaction is GTP + H2O = GDP + phosphate + H(+). Its function is as follows. GTP hydrolase that promotes the GTP-dependent binding of aminoacyl-tRNA to the A-site of ribosomes during protein biosynthesis. The chain is Elongation factor Tu 1 from Shewanella sp. (strain MR-4).